Here is a 310-residue protein sequence, read N- to C-terminus: Porphobilinogen deaminase (310 aa).

Position 242 is an S-(dipyrrolylmethanemethyl)cysteine (cysteine 242).

Belongs to the HMBS family. Monomer. It depends on dipyrromethane as a cofactor.

The enzyme catalyses 4 porphobilinogen + H2O = hydroxymethylbilane + 4 NH4(+). It functions in the pathway porphyrin-containing compound metabolism; protoporphyrin-IX biosynthesis; coproporphyrinogen-III from 5-aminolevulinate: step 2/4. In terms of biological role, tetrapolymerization of the monopyrrole PBG into the hydroxymethylbilane pre-uroporphyrinogen in several discrete steps. The sequence is that of Porphobilinogen deaminase from Shewanella baltica (strain OS195).